The primary structure comprises 397 residues: Succinate--CoA ligase [ADP-forming] subunit beta (397 aa).

Residues 9 to 254 (KALLKGYGAP…ETEEDAKEIE (246 aa)) enclose the ATP-grasp domain. ATP contacts are provided by residues Lys46, 53 to 55 (GRG), Glu109, Ala112, and Glu117. Mg(2+) is bound by residues Asn209 and Asp223. Substrate contacts are provided by residues Asn274 and 331–333 (GIM).

This sequence belongs to the succinate/malate CoA ligase beta subunit family. In terms of assembly, heterotetramer of two alpha and two beta subunits. Mg(2+) is required as a cofactor.

The enzyme catalyses succinate + ATP + CoA = succinyl-CoA + ADP + phosphate. It catalyses the reaction GTP + succinate + CoA = succinyl-CoA + GDP + phosphate. Its pathway is carbohydrate metabolism; tricarboxylic acid cycle; succinate from succinyl-CoA (ligase route): step 1/1. In terms of biological role, succinyl-CoA synthetase functions in the citric acid cycle (TCA), coupling the hydrolysis of succinyl-CoA to the synthesis of either ATP or GTP and thus represents the only step of substrate-level phosphorylation in the TCA. The beta subunit provides nucleotide specificity of the enzyme and binds the substrate succinate, while the binding sites for coenzyme A and phosphate are found in the alpha subunit. In Rhizobium leguminosarum bv. trifolii (strain WSM2304), this protein is Succinate--CoA ligase [ADP-forming] subunit beta.